Reading from the N-terminus, the 164-residue chain is CDP-archaeol synthase (164 aa).

4 helical membrane passes run 3–23, 53–73, 77–97, and 126–146; these read LFVFFALIWPPYVANGSAVLA, GLAIGVVLGTVVGYLPNLLHP, LLDALILSVAALLGDLLGAFI, and SLYADVPVEYIIAASVVTPII.

It belongs to the CDP-archaeol synthase family. Mg(2+) is required as a cofactor.

The protein localises to the cell membrane. It catalyses the reaction 2,3-bis-O-(geranylgeranyl)-sn-glycerol 1-phosphate + CTP + H(+) = CDP-2,3-bis-O-(geranylgeranyl)-sn-glycerol + diphosphate. The protein operates within membrane lipid metabolism; glycerophospholipid metabolism. Catalyzes the formation of CDP-2,3-bis-(O-geranylgeranyl)-sn-glycerol (CDP-archaeol) from 2,3-bis-(O-geranylgeranyl)-sn-glycerol 1-phosphate (DGGGP) and CTP. This reaction is the third ether-bond-formation step in the biosynthesis of archaeal membrane lipids. This Pyrobaculum arsenaticum (strain DSM 13514 / JCM 11321 / PZ6) protein is CDP-archaeol synthase.